The following is a 300-amino-acid chain: B1 kinase (300 aa).

The Protein kinase domain maps to W16 to F282. ATP is bound by residues I22–I30 and K45. D147 acts as the Proton acceptor in catalysis.

The protein belongs to the protein kinase superfamily. Ser/Thr protein kinase family. Poxviruses subfamily. Interacts with host JIP1; this interaction increases the amount of MAPK bound to JIP1 and subsequently increases the activity of transcription factors, such as JUN, that respond to these complexes. Interacts with protein OPG198; this interaction inhibits the repressive activity of OPG198 pseudokinase on viral replication factory formation. Mg(2+) serves as cofactor. Post-translationally, autophosphorylated.

Its subcellular location is the virion. The protein resides in the host cytoplasm. It catalyses the reaction L-seryl-[protein] + ATP = O-phospho-L-seryl-[protein] + ADP + H(+). The catalysed reaction is L-threonyl-[protein] + ATP = O-phospho-L-threonyl-[protein] + ADP + H(+). Essential serine/threonine-protein kinase that plays different role in the viral life cycle. Phosphorylates the host small ribosomal protein RACK1 thereby customizing the ribosomes to a state optimal for viral mRNAs (which contain poly-A leaders) but not for host mRNAs. Facilitates viral DNA replication by inhibiting host BANF1, a cellular host defense responsive to foreign DNA. Phosphorylates host BANF1 on serine and threonine residues; this leads to BANF1 relocalization to the cytoplasm, loss of dimerization and impaired DNA binding activity. Indeed, BANF1 activity depends on its DNA-binding property which is blocked by VPK1-mediated phosphorylation. Required for viral intermediate genes expression, probably by inhibiting host BANF1. Modulates cellular responses via host JUN by two different mechanisms, either by direct phosphorylation or by modulation of upstream JIP1-MAPK complexes. Seems to participate in the accumulation/processing of late proteins and thus in virion maturation. In addition, inhibits B12 repressive activity on viral DNA replication via a phosphorylation-dependent mechanism. The sequence is that of B1 kinase (OPG187) from Vaccinia virus (strain Ankara) (VACV).